The chain runs to 65 residues: Large ribosomal subunit protein bL35 (65 aa).

The protein belongs to the bacterial ribosomal protein bL35 family.

This Acetivibrio thermocellus (strain ATCC 27405 / DSM 1237 / JCM 9322 / NBRC 103400 / NCIMB 10682 / NRRL B-4536 / VPI 7372) (Clostridium thermocellum) protein is Large ribosomal subunit protein bL35.